Reading from the N-terminus, the 83-residue chain is Large ribosomal subunit protein bL27 (83 aa).

It belongs to the bacterial ribosomal protein bL27 family.

The protein is Large ribosomal subunit protein bL27 of Thermotoga neapolitana (strain ATCC 49049 / DSM 4359 / NBRC 107923 / NS-E).